The chain runs to 304 residues: Hairy/enhancer-of-split related with YRPW motif protein 1 (304 aa).

Residues Met1–Arg52 form a disordered region. The segment covering Glu28–Ile47 has biased composition (polar residues). The interval Leu48–Ala117 is transcriptional repression and interaction with NCOR1 and SIN3A. A bHLH domain is found at Ala49–Leu104. One can recognise an Orange domain in the interval Tyr122–Leu158. Residues Ser197 to Thr211 show a composition bias toward polar residues. A disordered region spans residues Ser197–Ser234. The short motif at Tyr294–Trp297 is the YRPW motif element.

This sequence belongs to the HEY family. As to quaternary structure, self-associates. Interacts with HES1 and HEYL. Interacts with HDAC1, NCOR1 and SIN3A. Interacts with GATA4 and GATA6. Interacts with CCDC89/BOIP.

It is found in the nucleus. Its function is as follows. Transcriptional repressor which binds preferentially to the canonical E box sequence 5'-CACGTG-3'. Downstream effector of Notch signaling required for cardiovascular development. Specifically required for the Notch-induced endocardial epithelial to mesenchymal transition, which is itself criticial for cardiac valve and septum development. May be required in conjunction with HEY2 to specify arterial cell fate or identity. Promotes maintenance of neuronal precursor cells and glial versus neuronal fate specification. Represses transcription by the cardiac transcriptional activators GATA4 and GATA6 and by the neuronal bHLH factors ASCL1/MASH1 and NEUROD4/MATH3. The sequence is that of Hairy/enhancer-of-split related with YRPW motif protein 1 (HEY1) from Bos taurus (Bovine).